Reading from the N-terminus, the 21-residue chain is Paulistine (21 aa).

Cysteine 7 and cysteine 14 are disulfide-bonded. The residue at position 21 (threonine 21) is a Threonine amide.

This sequence belongs to the sylv/frat/paul family. In terms of processing, occurs in oxidized and reduced states which are thought to adopt a compact globular and linear structure, respectively.

In terms of biological role, induces transient hyperalgesia and paw edema in mice. Probably exerts its effects via different pathways in an oxidation state-dependent way. The polypeptide is Paulistine (Polybia paulista (Neotropical social wasp)).